Here is a 214-residue protein sequence, read N- to C-terminus: Pyrophosphatase PpaX (214 aa).

Residue Asp-9 is the Nucleophile of the active site.

Belongs to the HAD-like hydrolase superfamily. PpaX family. It depends on Mg(2+) as a cofactor.

It catalyses the reaction diphosphate + H2O = 2 phosphate + H(+). In terms of biological role, hydrolyzes pyrophosphate formed during P-Ser-HPr dephosphorylation by HPrK/P. Might play a role in controlling the intracellular pyrophosphate pool. The sequence is that of Pyrophosphatase PpaX from Oceanobacillus iheyensis (strain DSM 14371 / CIP 107618 / JCM 11309 / KCTC 3954 / HTE831).